Here is a 237-residue protein sequence, read N- to C-terminus: Small ribosomal subunit protein uS3 (237 aa).

A KH type-2 domain is found at 39–107; it reads VRQFLTKELK…PAQINISEVR (69 aa).

The protein belongs to the universal ribosomal protein uS3 family. As to quaternary structure, part of the 30S ribosomal subunit. Forms a tight complex with proteins S10 and S14.

Binds the lower part of the 30S subunit head. Binds mRNA in the 70S ribosome, positioning it for translation. In Aeromonas hydrophila subsp. hydrophila (strain ATCC 7966 / DSM 30187 / BCRC 13018 / CCUG 14551 / JCM 1027 / KCTC 2358 / NCIMB 9240 / NCTC 8049), this protein is Small ribosomal subunit protein uS3.